A 340-amino-acid polypeptide reads, in one-letter code: Protein jhp_1168 (340 aa).

As to quaternary structure, seems to interact with H.pylori HolB.

Its function is as follows. Could be the functional equivalent of DNA polymerase III delta subunit (HolA). The protein is Protein jhp_1168 of Helicobacter pylori (strain J99 / ATCC 700824) (Campylobacter pylori J99).